We begin with the raw amino-acid sequence, 707 residues long: Ribosomal RNA large subunit methyltransferase K/L (707 aa).

The 112-residue stretch at 44-155 (VIYNLCLWSR…NDILTVSFDL (112 aa)) folds into the THUMP domain.

Belongs to the methyltransferase superfamily. RlmKL family.

It is found in the cytoplasm. It carries out the reaction guanosine(2445) in 23S rRNA + S-adenosyl-L-methionine = N(2)-methylguanosine(2445) in 23S rRNA + S-adenosyl-L-homocysteine + H(+). The enzyme catalyses guanosine(2069) in 23S rRNA + S-adenosyl-L-methionine = N(2)-methylguanosine(2069) in 23S rRNA + S-adenosyl-L-homocysteine + H(+). Functionally, specifically methylates the guanine in position 2445 (m2G2445) and the guanine in position 2069 (m7G2069) of 23S rRNA. The protein is Ribosomal RNA large subunit methyltransferase K/L of Legionella pneumophila (strain Corby).